Consider the following 356-residue polypeptide: Peptide chain release factor 1 (356 aa).

Glutamine 233 is subject to N5-methylglutamine.

Belongs to the prokaryotic/mitochondrial release factor family. Methylated by PrmC. Methylation increases the termination efficiency of RF1.

It is found in the cytoplasm. In terms of biological role, peptide chain release factor 1 directs the termination of translation in response to the peptide chain termination codons UAG and UAA. In Oceanobacillus iheyensis (strain DSM 14371 / CIP 107618 / JCM 11309 / KCTC 3954 / HTE831), this protein is Peptide chain release factor 1.